The following is a 517-amino-acid chain: 2,3-bisphosphoglycerate-independent phosphoglycerate mutase 1 (517 aa).

Mn(2+)-binding residues include Asp17 and Ser67. The Phosphoserine intermediate role is filled by Ser67. Substrate-binding positions include His128, 158–159 (RD), Arg190, Arg196, 267–270 (RPDR), and Lys340. Positions 407, 411, 448, 449, and 467 each coordinate Mn(2+).

Belongs to the BPG-independent phosphoglycerate mutase family. It depends on Mn(2+) as a cofactor.

The enzyme catalyses (2R)-2-phosphoglycerate = (2R)-3-phosphoglycerate. The protein operates within carbohydrate degradation; glycolysis; pyruvate from D-glyceraldehyde 3-phosphate: step 3/5. Its function is as follows. Catalyzes the interconversion of 2-phosphoglycerate and 3-phosphoglycerate. The sequence is that of 2,3-bisphosphoglycerate-independent phosphoglycerate mutase 1 from Methanosarcina barkeri (strain Fusaro / DSM 804).